The primary structure comprises 418 residues: Tyrosine--tRNA ligase (418 aa).

L-tyrosine is bound at residue Tyr34. Residues 39 to 48 carry the 'HIGH' region motif; sequence PTADSLHLGH. Residues Tyr169 and Gln173 each coordinate L-tyrosine. The 'KMSKS' region signature appears at 229–233; the sequence is KFGKS. An ATP-binding site is contributed by Lys232. Residues 352–418 form the S4 RNA-binding domain; sequence LNLVDMLVTA…GKKKYAVLTY (67 aa).

The protein belongs to the class-I aminoacyl-tRNA synthetase family. TyrS type 1 subfamily. As to quaternary structure, homodimer.

It localises to the cytoplasm. It carries out the reaction tRNA(Tyr) + L-tyrosine + ATP = L-tyrosyl-tRNA(Tyr) + AMP + diphosphate + H(+). Catalyzes the attachment of tyrosine to tRNA(Tyr) in a two-step reaction: tyrosine is first activated by ATP to form Tyr-AMP and then transferred to the acceptor end of tRNA(Tyr). This chain is Tyrosine--tRNA ligase, found in Streptococcus pyogenes serotype M18 (strain MGAS8232).